The sequence spans 86 residues: Cardiotoxin homolog TA-ctx-like (86 aa).

The N-terminal stretch at 1–21 is a signal peptide; the sequence is MKTLLLTLVVLTIACLDLGYT. Intrachain disulfides connect Cys-24/Cys-45, Cys-38/Cys-62, Cys-66/Cys-78, and Cys-79/Cys-84.

This sequence belongs to the three-finger toxin family. Short-chain subfamily. Orphan group IX sub-subfamily. Expressed by the venom gland.

The protein localises to the secreted. In Bungarus multicinctus (Many-banded krait), this protein is Cardiotoxin homolog TA-ctx-like.